The sequence spans 322 residues: Sideroflexin-1 (322 aa).

At Ser-2 the chain carries N-acetylserine. Topologically, residues Ser-2–Thr-102 are mitochondrial matrix. A helical membrane pass occupies residues Ile-103–Trp-120. The Mitochondrial intermembrane portion of the chain corresponds to Gln-121–Glu-146. The helical transmembrane segment at Leu-147–Ala-167 threads the bilayer. Topologically, residues Leu-168 to Pro-174 are mitochondrial matrix. Residues Leu-175–Leu-195 traverse the membrane as a helical segment. Residues Met-196–Gln-228 lie on the Mitochondrial intermembrane side of the membrane. Residues Val-229–Asn-249 form a helical membrane-spanning segment. The Mitochondrial matrix segment spans residues Thr-250–Pro-266. A helical membrane pass occupies residues Ile-267–Phe-287. The Mitochondrial intermembrane segment spans residues Pro-288–Leu-322.

This sequence belongs to the sideroflexin family. In terms of tissue distribution, highly expressed in tissues with high one-carbon metabolism activity, such as blood, liver and kidney.

Its subcellular location is the mitochondrion inner membrane. It carries out the reaction L-serine(in) = L-serine(out). It catalyses the reaction L-alanine(in) = L-alanine(out). The catalysed reaction is L-cysteine(in) = L-cysteine(out). Its function is as follows. Amino acid transporter importing serine, an essential substrate of the mitochondrial branch of the one-carbon pathway, into mitochondria. Mitochondrial serine is then converted to glycine and formate, which exits to the cytosol where it is used to generate the charged folates that serve as one-carbon donors. May also transport other amino acids including alanine and cysteine. The sequence is that of Sideroflexin-1 from Homo sapiens (Human).